A 560-amino-acid chain; its full sequence is MTILLEEKEKLTFECETGNYHTFCPISCVSWLYQKIEDSFFLVIGTKTCGYFLQNALGVMIFAEPRYAMAELEESDISAKLNDYKELKRLCFQIKEDRNPSVIVWIGTCTTEIIKMDLEGMAPELERELGIPIVVARANGLDYAFTQGEDTVLAAMAQRCPSLPLNVEEKSQNSLFNQSSNSPENLKTLNTKKDTFQNSTENSKTFSAEKKKTQNPFEFFKSLEEFFPSFSIQNNKKETILSKNSFVPFVEVEKNMYPLESSENSKAESFYHLLREGEQTNQNSELVKPKLVLFGSLPNTVATQLKLELNRQGIEISGWLPSTRYSDLPILDTNTYVCGVNPFLSRTATTLMRRRKCKLISAPFPIGPDGTKAWIEKICSIYGKKPIGLEERETKIWEGLEDSLKLVRGKSVFFMGDNLLEISLARFLIRCGMIVYEIGIPYLDQRFQAAELALLEKTCFEMNVPVPRIVEKPDNYYQISRIRELQPDLVITGMAHANPLEARNITTKWSVEFTFAQIHGFTNAREILDLVTRPLRRNQNINSFSEFFGSTTSTFVQNQF.

Cysteine 24, cysteine 49, and cysteine 109 together coordinate [4Fe-4S] cluster. A compositionally biased stretch (low complexity) spans 173-182 (NSLFNQSSNS). Positions 173 to 210 (NSLFNQSSNSPENLKTLNTKKDTFQNSTENSKTFSAEK) are disordered. Over residues 196 to 206 (FQNSTENSKTF) the composition is skewed to polar residues.

The protein belongs to the BchN/ChlN family. As to quaternary structure, protochlorophyllide reductase is composed of three subunits; ChlL, ChlN and ChlB. Forms a heterotetramer of two ChlB and two ChlN subunits. [4Fe-4S] cluster is required as a cofactor.

Its subcellular location is the plastid. It localises to the chloroplast. The enzyme catalyses chlorophyllide a + oxidized 2[4Fe-4S]-[ferredoxin] + 2 ADP + 2 phosphate = protochlorophyllide a + reduced 2[4Fe-4S]-[ferredoxin] + 2 ATP + 2 H2O. It functions in the pathway porphyrin-containing compound metabolism; chlorophyll biosynthesis (light-independent). In terms of biological role, component of the dark-operative protochlorophyllide reductase (DPOR) that uses Mg-ATP and reduced ferredoxin to reduce ring D of protochlorophyllide (Pchlide) to form chlorophyllide a (Chlide). This reaction is light-independent. The NB-protein (ChlN-ChlB) is the catalytic component of the complex. The polypeptide is Light-independent protochlorophyllide reductase subunit N (Tetradesmus obliquus (Green alga)).